Consider the following 92-residue polypeptide: Small ribosomal subunit protein uS19 (92 aa).

It belongs to the universal ribosomal protein uS19 family.

Its function is as follows. Protein S19 forms a complex with S13 that binds strongly to the 16S ribosomal RNA. This chain is Small ribosomal subunit protein uS19, found in Sinorhizobium medicae (strain WSM419) (Ensifer medicae).